Reading from the N-terminus, the 158-residue chain is Cyclic pyranopterin monophosphate synthase (158 aa).

Substrate is bound by residues leucine 75 to histidine 77 and methionine 113 to glutamate 114. Aspartate 128 is a catalytic residue.

This sequence belongs to the MoaC family. Homohexamer; trimer of dimers.

The enzyme catalyses (8S)-3',8-cyclo-7,8-dihydroguanosine 5'-triphosphate = cyclic pyranopterin phosphate + diphosphate. Its pathway is cofactor biosynthesis; molybdopterin biosynthesis. Its function is as follows. Catalyzes the conversion of (8S)-3',8-cyclo-7,8-dihydroguanosine 5'-triphosphate to cyclic pyranopterin monophosphate (cPMP). The protein is Cyclic pyranopterin monophosphate synthase of Paraburkholderia xenovorans (strain LB400).